Consider the following 258-residue polypeptide: CDP-diacylglycerol pyrophosphatase (258 aa).

Residues 10 to 30 traverse the membrane as a helical segment; the sequence is YLLTLLILIILAAGLIYKLRF.

This sequence belongs to the Cdh family.

The protein localises to the cell inner membrane. It catalyses the reaction a CDP-1,2-diacyl-sn-glycerol + H2O = a 1,2-diacyl-sn-glycero-3-phosphate + CMP + 2 H(+). It functions in the pathway phospholipid metabolism; CDP-diacylglycerol degradation; phosphatidate from CDP-diacylglycerol: step 1/1. This is CDP-diacylglycerol pyrophosphatase (cdh) from Yersinia pestis.